The chain runs to 178 residues: Transcription termination/antitermination protein NusG (178 aa).

The 31-residue stretch at 126 to 156 (VGQQVRVNEGPFADFNGVVEEVNYERNKLRV) folds into the KOW domain.

The protein belongs to the NusG family.

Participates in transcription elongation, termination and antitermination. The chain is Transcription termination/antitermination protein NusG from Neisseria meningitidis serogroup B (strain ATCC BAA-335 / MC58).